We begin with the raw amino-acid sequence, 492 residues long: ERAD-associated E3 ubiquitin-protein ligase HRD1A (492 aa).

The Cytoplasmic portion of the chain corresponds to 1–3; the sequence is MIR. The chain crosses the membrane as a helical span at residues 4 to 24; the sequence is LRTYAGLSFMATLAVIYHAFS. Residues 25-40 are Lumenal-facing; it reads SRGQFYPATVYLSTSK. A helical membrane pass occupies residues 41 to 61; sequence ISLVLLLNMCLVLMLSLWHLV. Over 62–98 the chain is Cytoplasmic; that stretch reads KFVFLGSLREAEVERLNEQAWRELMEILFAITIFRQD. Residues 99–119 traverse the membrane as a helical segment; sequence FSSGFLPLVVTLLLIKALHWL. Topologically, residues 120-135 are lumenal; it reads AQKRVEYIETTPSVSK. A helical transmembrane segment spans residues 136-156; the sequence is LSHFRIVSFMGFLLLVDSLFM. At 157-170 the chain is on the cytoplasmic side; that stretch reads YSSIRHLIQSRQAS. A helical transmembrane segment spans residues 171–191; that stretch reads VSLFFSFEYMILATTTVAIFV. Residues 192-221 lie on the Lumenal side of the membrane; sequence KYVFYVTDMLMDGQWEKKPVYTFYLELIRD. A helical membrane pass occupies residues 222-242; that stretch reads LLHLSMYICFFFVIFMNYGVP. Residues 243–492 lie on the Cytoplasmic side of the membrane; that stretch reads LHLLRELYET…KGKSVADAAE (250 aa). The RING-type; atypical zinc finger occupies 292-330; that stretch reads CIICREEMTNAKKLICGHLFHVHCLRSWLERQQTCPTCR. Disordered stretches follow at residues 339–379 and 470–492; these read ATSA…NSLS and ETRK…DAAE. Residues 351–378 are compositionally biased toward low complexity; sequence QGSQQGTSSSGNQGSEISSSAGVSNNSL. Residues 470–486 show a composition bias toward basic and acidic residues; sequence ETRKPESAGEPENKGKS.

Belongs to the HRD1 family.

Its subcellular location is the endoplasmic reticulum membrane. It catalyses the reaction S-ubiquitinyl-[E2 ubiquitin-conjugating enzyme]-L-cysteine + [acceptor protein]-L-lysine = [E2 ubiquitin-conjugating enzyme]-L-cysteine + N(6)-ubiquitinyl-[acceptor protein]-L-lysine.. Its pathway is protein modification; protein ubiquitination. Functionally, probable component of the HRD1 ubiquitin ligase complex that mediates the rapid degradation of misfolded endoplasmic reticulum (ER) proteins, a process called ER-associated degradation (ERAD). Targets the misfolded LRR receptor kinase BRI1. Functions redundantly with HRD3B. This chain is ERAD-associated E3 ubiquitin-protein ligase HRD1A, found in Arabidopsis thaliana (Mouse-ear cress).